The primary structure comprises 684 residues: Sorbicillinoid biosynthetic cluster transcription factor 2 (684 aa).

Residues 114–151 (ISSAPSLETPPESVAASPPTVDSIPVSHHVNEDPEAEP) form a disordered region.

Its subcellular location is the nucleus. Transcription factor that acts in concert with sorR1 which is a transcriptional activator of the gene cluster that mediates the biosynthesis of sorbicillinoids, a diverse group of yellow secondary metabolites that restrict growth of competing pathogenic fungi but not of bacteria. In Penicillium rubens (strain ATCC 28089 / DSM 1075 / NRRL 1951 / Wisconsin 54-1255) (Penicillium chrysogenum), this protein is Sorbicillinoid biosynthetic cluster transcription factor 2.